A 957-amino-acid chain; its full sequence is Valine--tRNA ligase (957 aa).

The short motif at Pro-47 to His-57 is the 'HIGH' region element. A 'KMSKS' region motif is present at residues Lys-558–Ser-562. Position 561 (Lys-561) interacts with ATP. The stretch at Phe-889–Asp-918 forms a coiled coil.

The protein belongs to the class-I aminoacyl-tRNA synthetase family. ValS type 1 subfamily. Monomer.

It localises to the cytoplasm. The enzyme catalyses tRNA(Val) + L-valine + ATP = L-valyl-tRNA(Val) + AMP + diphosphate. Functionally, catalyzes the attachment of valine to tRNA(Val). As ValRS can inadvertently accommodate and process structurally similar amino acids such as threonine, to avoid such errors, it has a 'posttransfer' editing activity that hydrolyzes mischarged Thr-tRNA(Val) in a tRNA-dependent manner. This Blochmanniella pennsylvanica (strain BPEN) protein is Valine--tRNA ligase.